The following is a 290-amino-acid chain: Small ribosomal subunit biogenesis GTPase RsgA (290 aa).

Residues 62–213 (KNSLVRPPIV…IADTPGFSSL (152 aa)) enclose the CP-type G domain. GTP contacts are provided by residues 111–114 (SKTD) and 156–164 (GQTGVGKTT). 4 residues coordinate Zn(2+): Cys-237, Cys-242, His-244, and Cys-250.

This sequence belongs to the TRAFAC class YlqF/YawG GTPase family. RsgA subfamily. Monomer. Associates with 30S ribosomal subunit, binds 16S rRNA. Requires Zn(2+) as cofactor.

The protein localises to the cytoplasm. One of several proteins that assist in the late maturation steps of the functional core of the 30S ribosomal subunit. Helps release RbfA from mature subunits. May play a role in the assembly of ribosomal proteins into the subunit. Circularly permuted GTPase that catalyzes slow GTP hydrolysis, GTPase activity is stimulated by the 30S ribosomal subunit. This chain is Small ribosomal subunit biogenesis GTPase RsgA, found in Streptococcus mutans serotype c (strain ATCC 700610 / UA159).